Reading from the N-terminus, the 229-residue chain is Phosphoglycolate phosphatase (229 aa).

Asp-13 acts as the Nucleophile in catalysis. 3 residues coordinate Mg(2+): Asp-13, Asp-15, and Asp-178.

It belongs to the HAD-like hydrolase superfamily. CbbY/CbbZ/Gph/YieH family. Requires Mg(2+) as cofactor.

The enzyme catalyses 2-phosphoglycolate + H2O = glycolate + phosphate. It participates in organic acid metabolism; glycolate biosynthesis; glycolate from 2-phosphoglycolate: step 1/1. In terms of biological role, specifically catalyzes the dephosphorylation of 2-phosphoglycolate. Is involved in the dissimilation of the intracellular 2-phosphoglycolate formed during the DNA repair of 3'-phosphoglycolate ends, a major class of DNA lesions induced by oxidative stress. The polypeptide is Phosphoglycolate phosphatase (Photobacterium profundum (strain SS9)).